A 338-amino-acid polypeptide reads, in one-letter code: Electron transfer flavoprotein subunit alpha (338 aa).

275–303 is an FAD binding site; it reads IYIACAISGAIQPLAGMTGSDCIIAINKD.

The protein belongs to the ETF alpha-subunit/FixB family. Heterodimer of an alpha and a beta subunit. It depends on FAD as a cofactor.

In terms of biological role, the electron transfer flavoprotein serves as a specific electron acceptor for other dehydrogenases. It transfers the electrons to the main respiratory chain via ETF-ubiquinone oxidoreductase (ETF dehydrogenase). This is Electron transfer flavoprotein subunit alpha (etfA) from Megasphaera elsdenii.